The primary structure comprises 475 residues: Ribulose bisphosphate carboxylase large chain (475 aa).

Positions 1–2 (MS) are excised as a propeptide. N-acetylproline is present on proline 3. Residue lysine 14 is modified to N6,N6,N6-trimethyllysine. 2 residues coordinate substrate: asparagine 123 and threonine 173. The active-site Proton acceptor is lysine 175. Substrate is bound at residue lysine 177. Residues lysine 201, aspartate 203, and glutamate 204 each coordinate Mg(2+). Lysine 201 is subject to N6-carboxylysine. Histidine 294 functions as the Proton acceptor in the catalytic mechanism. The substrate site is built by arginine 295, histidine 327, and serine 379.

It belongs to the RuBisCO large chain family. Type I subfamily. In terms of assembly, heterohexadecamer of 8 large chains and 8 small chains. Mg(2+) is required as a cofactor.

The protein localises to the plastid. The enzyme catalyses 2 (2R)-3-phosphoglycerate + 2 H(+) = D-ribulose 1,5-bisphosphate + CO2 + H2O. It carries out the reaction D-ribulose 1,5-bisphosphate + O2 = 2-phosphoglycolate + (2R)-3-phosphoglycerate + 2 H(+). Functionally, ruBisCO catalyzes two reactions: the carboxylation of D-ribulose 1,5-bisphosphate, the primary event in carbon dioxide fixation, as well as the oxidative fragmentation of the pentose substrate in the photorespiration process. Both reactions occur simultaneously and in competition at the same active site. This chain is Ribulose bisphosphate carboxylase large chain, found in Aneura mirabilis (Parasitic liverwort).